The chain runs to 201 residues: Adenylyl-sulfate kinase (201 aa).

The tract at residues 1–23 is disordered; that stretch reads MALHDENVVWHSHPVTPQQREQH. 35-42 provides a ligand contact to ATP; the sequence is GLSGSGKS. Ser109 functions as the Phosphoserine intermediate in the catalytic mechanism.

Belongs to the APS kinase family.

The enzyme catalyses adenosine 5'-phosphosulfate + ATP = 3'-phosphoadenylyl sulfate + ADP + H(+). It participates in sulfur metabolism; hydrogen sulfide biosynthesis; sulfite from sulfate: step 2/3. In terms of biological role, catalyzes the synthesis of activated sulfate. This chain is Adenylyl-sulfate kinase, found in Escherichia coli O6:K15:H31 (strain 536 / UPEC).